A 215-amino-acid chain; its full sequence is E3 ubiquitin-protein ligase znrf1 (215 aa).

2 disordered regions span residues 1–39 (MGGK…PGGT) and 66–96 (YTPR…ETGG). Residue glycine 2 is the site of N-myristoyl glycine attachment. The RING-type; atypical zinc-finger motif lies at 172–213 (CVICLEELQQGDTIARLPCLCIYHKSCIDSWFEINRSCPEHP).

It localises to the endosome. It is found in the lysosome. Its subcellular location is the membrane. The enzyme catalyses S-ubiquitinyl-[E2 ubiquitin-conjugating enzyme]-L-cysteine + [acceptor protein]-L-lysine = [E2 ubiquitin-conjugating enzyme]-L-cysteine + N(6)-ubiquitinyl-[acceptor protein]-L-lysine.. The protein operates within protein modification; protein ubiquitination. In terms of biological role, E3 ubiquitin-protein ligase that plays a role in neuron cells differentiation. Plays a role in the establishment and maintenance of neuronal transmission and plasticity. This Danio rerio (Zebrafish) protein is E3 ubiquitin-protein ligase znrf1 (znrf1).